The primary structure comprises 630 residues: 1-deoxy-D-xylulose-5-phosphate synthase (630 aa).

Thiamine diphosphate is bound by residues His-72 and 113–115 (GHS). Asp-144 is a Mg(2+) binding site. Residues 145 to 146 (GA), Asn-173, Tyr-284, and Glu-367 each bind thiamine diphosphate. Asn-173 is a binding site for Mg(2+).

Belongs to the transketolase family. DXPS subfamily. Homodimer. The cofactor is Mg(2+). Thiamine diphosphate serves as cofactor.

The enzyme catalyses D-glyceraldehyde 3-phosphate + pyruvate + H(+) = 1-deoxy-D-xylulose 5-phosphate + CO2. It participates in metabolic intermediate biosynthesis; 1-deoxy-D-xylulose 5-phosphate biosynthesis; 1-deoxy-D-xylulose 5-phosphate from D-glyceraldehyde 3-phosphate and pyruvate: step 1/1. Functionally, catalyzes the acyloin condensation reaction between C atoms 2 and 3 of pyruvate and glyceraldehyde 3-phosphate to yield 1-deoxy-D-xylulose-5-phosphate (DXP). In Bacillus cereus (strain AH187), this protein is 1-deoxy-D-xylulose-5-phosphate synthase.